A 352-amino-acid polypeptide reads, in one-letter code: N-acetyl-gamma-glutamyl-phosphate reductase (352 aa).

Residue Cys155 is part of the active site.

It belongs to the NAGSA dehydrogenase family. Type 1 subfamily.

The protein resides in the cytoplasm. It catalyses the reaction N-acetyl-L-glutamate 5-semialdehyde + phosphate + NADP(+) = N-acetyl-L-glutamyl 5-phosphate + NADPH + H(+). Its pathway is amino-acid biosynthesis; L-arginine biosynthesis; N(2)-acetyl-L-ornithine from L-glutamate: step 3/4. Its function is as follows. Catalyzes the NADPH-dependent reduction of N-acetyl-5-glutamyl phosphate to yield N-acetyl-L-glutamate 5-semialdehyde. This chain is N-acetyl-gamma-glutamyl-phosphate reductase, found in Brachyspira hyodysenteriae (strain ATCC 49526 / WA1).